Here is a 382-residue protein sequence, read N- to C-terminus: Zinc metalloproteinase nas-7 (382 aa).

Positions 1–18 (MLLPWIITIVTVIPATLG) are cleaved as a signal peptide. Positions 19 to 79 (HRNRVQDDEM…DIRLPRRHKR (61 aa)) are excised as a propeptide. One can recognise a Peptidase M12A domain in the interval 80 to 273 (NGVSRAAKLW…SKINRMYNCP (194 aa)). Intrachain disulfides connect Cys-122/Cys-272, Cys-144/Cys-163, Cys-348/Cys-382, Cys-355/Cys-375, and Cys-362/Cys-379. Zn(2+) is bound at residue His-171. Glu-172 is an active-site residue. Positions 175 and 181 each coordinate Zn(2+). In terms of domain architecture, ShKT spans 348–382 (CEDRITVCWWTADRCRSPAIYQVMSSLCPKTCKFC).

The cofactor is Zn(2+). In terms of tissue distribution, expressed in the head of adult hermaphrodites but not within pharynx cells. Expressed in pharyngeal muscles, mc cells, intestine, hypodermal seam cells, arcade cells, spermatheca, vulva and rectal epithelial cells.

The protein resides in the secreted. In terms of biological role, metalloprotease. The sequence is that of Zinc metalloproteinase nas-7 (nas-7) from Caenorhabditis elegans.